The following is a 128-amino-acid chain: Probable 4-amino-4-deoxy-L-arabinose-phosphoundecaprenol flippase subunit ArnF (128 aa).

Topologically, residues 1–2 (MG) are cytoplasmic. The chain crosses the membrane as a helical span at residues 3 to 23 (LMWGLFSVIIASAAQLSLGFA). Residues 24-35 (ASHLPPMTHLWD) lie on the Periplasmic side of the membrane. Residues 36 to 56 (FIAALLAFGLDARILLLGLLG) traverse the membrane as a helical segment. Residues 57–76 (YLLSVFCWYKTLHKLALSKA) lie on the Cytoplasmic side of the membrane. Residues 77 to 97 (YALLSMSYVLVWIASMVLPGW) traverse the membrane as a helical segment. The Periplasmic portion of the chain corresponds to 98-100 (EGT). The chain crosses the membrane as a helical span at residues 101 to 121 (FSLKALLGVACIMSGLMLIFL). The Cytoplasmic segment spans residues 122-128 (PTTKQRY).

This sequence belongs to the ArnF family. Heterodimer of ArnE and ArnF.

The protein localises to the cell inner membrane. The protein operates within bacterial outer membrane biogenesis; lipopolysaccharide biosynthesis. Functionally, translocates 4-amino-4-deoxy-L-arabinose-phosphoundecaprenol (alpha-L-Ara4N-phosphoundecaprenol) from the cytoplasmic to the periplasmic side of the inner membrane. This chain is Probable 4-amino-4-deoxy-L-arabinose-phosphoundecaprenol flippase subunit ArnF, found in Escherichia coli O127:H6 (strain E2348/69 / EPEC).